The following is a 202-amino-acid chain: uncharacterized protein (202 aa).

Lys-136 participates in a covalent cross-link: Isoglutamyl lysine isopeptide (Lys-Gln) (interchain with Q-Cter in protein Pup).

This is an uncharacterized protein from Mycobacterium tuberculosis (strain ATCC 25618 / H37Rv).